The following is a 982-amino-acid chain: Glycine dehydrogenase (decarboxylating) (982 aa).

Lys721 is subject to N6-(pyridoxal phosphate)lysine.

It belongs to the GcvP family. In terms of assembly, the glycine cleavage system is composed of four proteins: P, T, L and H. Pyridoxal 5'-phosphate is required as a cofactor.

It carries out the reaction N(6)-[(R)-lipoyl]-L-lysyl-[glycine-cleavage complex H protein] + glycine + H(+) = N(6)-[(R)-S(8)-aminomethyldihydrolipoyl]-L-lysyl-[glycine-cleavage complex H protein] + CO2. The glycine cleavage system catalyzes the degradation of glycine. The P protein binds the alpha-amino group of glycine through its pyridoxal phosphate cofactor; CO(2) is released and the remaining methylamine moiety is then transferred to the lipoamide cofactor of the H protein. The protein is Glycine dehydrogenase (decarboxylating) of Prochlorococcus marinus (strain MIT 9303).